The following is a 281-amino-acid chain: Large ribosomal subunit protein uL2 (281 aa).

A disordered region spans residues 222–281; the sequence is TVRGSAMNPNDHPHGGGEGRQPIGRKSPMTPWGKRALGVKTRATKKASNQFIIRRRKETK.

The protein belongs to the universal ribosomal protein uL2 family. As to quaternary structure, part of the 50S ribosomal subunit. Forms a bridge to the 30S subunit in the 70S ribosome.

One of the primary rRNA binding proteins. Required for association of the 30S and 50S subunits to form the 70S ribosome, for tRNA binding and peptide bond formation. It has been suggested to have peptidyltransferase activity; this is somewhat controversial. Makes several contacts with the 16S rRNA in the 70S ribosome. This chain is Large ribosomal subunit protein uL2, found in Metamycoplasma hominis (strain ATCC 23114 / DSM 25592 / NBRC 14850 / NCTC 10111 / PG21) (Mycoplasma hominis).